The following is a 336-amino-acid chain: Deoxyhypusine hydroxylase (336 aa).

HEAT-like PBS-type repeat units follow at residues 68–94 (LKHE…VVQD) and 101–127 (CRHE…LRDN). Fe cation is bound by residues His70, Glu71, His103, and Glu104. The disordered stretch occupies residues 158–179 (LKPSDFTSIDPAPPMPLTAKEP). 2 HEAT-like PBS-type repeats span residues 235–261 (FRHE…TLSD) and 268–295 (VRHE…FLND). His237, Glu238, His270, and Glu271 together coordinate Fe cation.

It belongs to the deoxyhypusine hydroxylase family. The cofactor is Fe(2+).

The protein localises to the cytoplasm. It is found in the nucleus. The catalysed reaction is [eIF5A protein]-deoxyhypusine + AH2 + O2 = [eIF5A protein]-hypusine + A + H2O. It functions in the pathway protein modification; eIF5A hypusination. Its function is as follows. Catalyzes the hydroxylation of the N(6)-(4-aminobutyl)-L-lysine intermediate to form hypusine, an essential post-translational modification only found in mature eIF-5A factor. The polypeptide is Deoxyhypusine hydroxylase (lia1) (Emericella nidulans (strain FGSC A4 / ATCC 38163 / CBS 112.46 / NRRL 194 / M139) (Aspergillus nidulans)).